Here is a 796-residue protein sequence, read N- to C-terminus: Histone acetyltransferase KAT2B (796 aa).

Disordered stretches follow at residues 1–32 (MSESTGIPQGSPAVGAAGSAPAAPGVGGTECS), 77–97 (WKSQNPPPTPPPPTPPRAEQP), and 371–408 (AGGGSVSPARKTASVLEPNPGGEKRKPAEPLSHEDSKR). Over residues 10-24 (GSPAVGAAGSAPAAP) the composition is skewed to low complexity. Over residues 81 to 94 (NPPPTPPPPTPPRA) the composition is skewed to pro residues. Over residues 392–408 (GEKRKPAEPLSHEDSKR) the composition is skewed to basic and acidic residues. One can recognise an N-acetyltransferase domain in the interval 469–617 (LNQKPNKKIL…GATLMGCELN (149 aa)). The active-site Proton donor/acceptor is glutamate 536. Residues 540–542 (CAV), 547–553 (QVKGYGT), and 578–581 (YAIG) contribute to the acetyl-CoA site. The Bromo domain occupies 687-791 (KDPDQLYSTL…KFFYTKIKEA (105 aa)).

Belongs to the acetyltransferase family. GCN5 subfamily.

It is found in the nucleus. The protein localises to the cytoplasm. Its subcellular location is the cytoskeleton. The protein resides in the microtubule organizing center. It localises to the centrosome. The enzyme catalyses L-lysyl-[histone] + acetyl-CoA = N(6)-acetyl-L-lysyl-[histone] + CoA + H(+). The catalysed reaction is L-lysyl-[protein] + acetyl-CoA = N(6)-acetyl-L-lysyl-[protein] + CoA + H(+). It carries out the reaction spermidine + acetyl-CoA = N(8)-acetylspermidine + CoA + H(+). Functions as a histone acetyltransferase (HAT) to promote transcriptional activation. Has significant histone acetyltransferase activity with core histones (H3 and H4), and also with nucleosome core particles. Has a a strong preference for acetylation of H3 at 'Lys-9' (H3K9ac). Also acetylates non-histone proteins. Involved in heart and limb development by mediating acetylation of tbx5. Also acetylates spermidine. Together with kat2a, required for growth and differentiation of craniofacial cartilage and bone by regulating acetylation of histone H3 at 'Lys-9' (H3K9ac). In Danio rerio (Zebrafish), this protein is Histone acetyltransferase KAT2B.